The following is a 362-amino-acid chain: Phosphoserine aminotransferase (362 aa).

L-glutamate is bound by residues Ser-9 and Arg-42. Pyridoxal 5'-phosphate-binding positions include Gly-76–Arg-77, Trp-102, Thr-153, Asp-174, and Gln-197. Position 198 is an N6-(pyridoxal phosphate)lysine (Lys-198). Asn-239–Thr-240 lines the pyridoxal 5'-phosphate pocket.

The protein belongs to the class-V pyridoxal-phosphate-dependent aminotransferase family. SerC subfamily. Homodimer. It depends on pyridoxal 5'-phosphate as a cofactor.

The protein localises to the cytoplasm. It carries out the reaction O-phospho-L-serine + 2-oxoglutarate = 3-phosphooxypyruvate + L-glutamate. The catalysed reaction is 4-(phosphooxy)-L-threonine + 2-oxoglutarate = (R)-3-hydroxy-2-oxo-4-phosphooxybutanoate + L-glutamate. The protein operates within amino-acid biosynthesis; L-serine biosynthesis; L-serine from 3-phospho-D-glycerate: step 2/3. Its pathway is cofactor biosynthesis; pyridoxine 5'-phosphate biosynthesis; pyridoxine 5'-phosphate from D-erythrose 4-phosphate: step 3/5. Its function is as follows. Catalyzes the reversible conversion of 3-phosphohydroxypyruvate to phosphoserine and of 3-hydroxy-2-oxo-4-phosphonooxybutanoate to phosphohydroxythreonine. The sequence is that of Phosphoserine aminotransferase from Citrobacter koseri (strain ATCC BAA-895 / CDC 4225-83 / SGSC4696).